Consider the following 494-residue polypeptide: Alpha-amylase-related protein (494 aa).

The signal sequence occupies residues Met1–Ala20. Gln21 carries the post-translational modification Pyrrolidone carboxylic acid. The cysteines at positions 48 and 104 are disulfide-linked. The Ca(2+) site is built by Asn118, Gln169, and Asp178. Cys157 and Cys171 are oxidised to a cystine. Arg206 is a chloride binding site. Residue Asp208 is the Nucleophile of the active site. Position 212 (His212) interacts with Ca(2+). The active-site Proton donor is Glu245. 2 residues coordinate chloride: Asn308 and Arg343. Disulfide bonds link Cys376–Cys382, Cys418–Cys441, and Cys448–Cys460.

This sequence belongs to the glycosyl hydrolase 13 family. As to quaternary structure, monomer. Ca(2+) serves as cofactor. The cofactor is chloride.

The protein resides in the secreted. It carries out the reaction Endohydrolysis of (1-&gt;4)-alpha-D-glucosidic linkages in polysaccharides containing three or more (1-&gt;4)-alpha-linked D-glucose units.. The polypeptide is Alpha-amylase-related protein (Amyrel) (Drosophila punjabiensis (Fruit fly)).